The chain runs to 170 residues: NADH-dependent flavin reductase StyB (170 aa).

Belongs to the non-flavoprotein flavin reductase family. As to quaternary structure, homodimer.

It catalyses the reaction a reduced flavin + NAD(+) = an oxidized flavin + NADH + 2 H(+). Its pathway is aromatic compound metabolism. Its function is as follows. Reductase component of a two-component system that catalyzes the first step in the aerobic styrene degradation pathway by enantioselective epoxidation of the vinyl side chain. Utilizes NADH to reduce FAD, which is then transferred to the styrene monooxygenase StyA. This Pseudomonas fluorescens protein is NADH-dependent flavin reductase StyB (styB).